The primary structure comprises 2199 residues: DNA polymerase epsilon catalytic subunit A (2199 aa).

Zn(2+) is bound by residues cysteine 2069, cysteine 2072, cysteine 2104, and cysteine 2107. The CysA-type zinc finger occupies 2069 to 2107 (CKQCGVHQDFDLCLHEHLWPTRDDMGTLVFSDGWSCSSC). [4Fe-4S] cluster contacts are provided by cysteine 2138, cysteine 2141, cysteine 2153, and cysteine 2155. A CysB motif motif is present at residues 2138–2155 (CSKCKTVKQWSLKERCSC).

The protein belongs to the DNA polymerase type-B family. As to quaternary structure, heterotetramer. Consists of 4 subunits: pol2, dpb2, dpb3 and dpb4. The cofactor is [4Fe-4S] cluster.

The protein localises to the nucleus. It catalyses the reaction DNA(n) + a 2'-deoxyribonucleoside 5'-triphosphate = DNA(n+1) + diphosphate. DNA polymerase II participates in chromosomal DNA replication. This is DNA polymerase epsilon catalytic subunit A (pol2) from Schizosaccharomyces pombe (strain 972 / ATCC 24843) (Fission yeast).